Consider the following 697-residue polypeptide: Elongation factor G 2 (697 aa).

The 276-residue stretch at 5–280 folds into the tr-type G domain; sequence SKYRNIGIFA…AVVDYLPAPD (276 aa). GTP contacts are provided by residues 14–21, 78–82, and 132–135; these read AHVDAGKT, DTPGH, and NKLD.

It belongs to the TRAFAC class translation factor GTPase superfamily. Classic translation factor GTPase family. EF-G/EF-2 subfamily.

It is found in the cytoplasm. Functionally, catalyzes the GTP-dependent ribosomal translocation step during translation elongation. During this step, the ribosome changes from the pre-translocational (PRE) to the post-translocational (POST) state as the newly formed A-site-bound peptidyl-tRNA and P-site-bound deacylated tRNA move to the P and E sites, respectively. Catalyzes the coordinated movement of the two tRNA molecules, the mRNA and conformational changes in the ribosome. The chain is Elongation factor G 2 from Shewanella sp. (strain MR-7).